A 669-amino-acid polypeptide reads, in one-letter code: MGKIKELQTSLANKIAAGEVVERPSSVVKELLENAIDAGATEISIEVEESGVQSIRVVDNGSGIEAEDLGLVFHRHATSKLDQDEDLFHIRTLGFRGEALASISSVAKVTLKTCTDNANGNEIYVENGEILNHKPAKAKKGTDILVESLFYNTPARLKYIKSLYTELGKITDIVNRMAMSHPDIRIALISDGKTMLSTNGSGRTNEVMAEIYGMKVARDLVHISGDTSDYHIEGFVAKPEHSRSNKHYISIFINGRYIKNFMLNKAILEGYHTLLTIGRFPICYINIEMDPILVDVNVHPTKLEVRLSKEEQLYQLIVSKIQEAFKDRILIPKNNLDYVPKKNKVLHSFEQQKIEFEQRQNTENKQEKTFSSEESNSKPFMAENQNDEIVIKEDSYNPFVTKTSESLIADDESSGYNNTREKDEDYFKKQQEILQEMDQTFDSNDDTSVQNYENKASDDYYDVNDIKGTKSKDPKRRIPYMEIVGQVHGTYIIAQNEFGMYMIDQHAAQERIKYEYFRDKIGEVTNEIQDLLIPLTFHFSKDEQLVIDQYKNELQQVGIMLEHFGGHDYIVSSYPVWFPKDEVEEIIKDMIELILEEKKVDIKKLREDVAIMMSCKKSIKANHYLQKHEMSDLIDQLREAEDPFTCPHGRPIIINFSKYELEKLFKRVM.

Over residues 356-371 the composition is skewed to basic and acidic residues; sequence FEQRQNTENKQEKTFS. A disordered region spans residues 356 to 379; it reads FEQRQNTENKQEKTFSSEESNSKP.

The protein belongs to the DNA mismatch repair MutL/HexB family.

Its function is as follows. This protein is involved in the repair of mismatches in DNA. It is required for dam-dependent methyl-directed DNA mismatch repair. May act as a 'molecular matchmaker', a protein that promotes the formation of a stable complex between two or more DNA-binding proteins in an ATP-dependent manner without itself being part of a final effector complex. This chain is DNA mismatch repair protein MutL, found in Staphylococcus aureus (strain MRSA252).